Here is a 67-residue protein sequence, read N- to C-terminus: Large ribosomal subunit protein bL35 (67 aa).

The interval methionine 1–glycine 20 is disordered.

The protein belongs to the bacterial ribosomal protein bL35 family.

The chain is Large ribosomal subunit protein bL35 from Anaeromyxobacter dehalogenans (strain 2CP-1 / ATCC BAA-258).